The following is a 143-amino-acid chain: Large ribosomal subunit protein uL15 (143 aa).

The disordered stretch occupies residues 1 to 52 (MKLNTLAPAAGSKSAPKRLGRGIGSGLGKTSGKGHKGQKARSGGYHKVGFEG). The span at 21 to 31 (RGIGSGLGKTS) shows a compositional bias: gly residues.

Belongs to the universal ribosomal protein uL15 family. In terms of assembly, part of the 50S ribosomal subunit.

Binds to the 23S rRNA. The chain is Large ribosomal subunit protein uL15 from Francisella tularensis subsp. tularensis (strain FSC 198).